Reading from the N-terminus, the 308-residue chain is Phenylcoumaran benzylic ether reductase Betv6 (308 aa).

Residues 11 to 17 (GGTGYIG), Arg-36, and Lys-45 each bind NADP(+). Lys-133 (proton acceptor) is an active-site residue. Residue Arg-137 participates in NADP(+) binding.

The protein belongs to the NmrA-type oxidoreductase family. Isoflavone reductase subfamily.

The enzyme catalyses (-)-dehydrodiconiferyl alcohol + NADPH + H(+) = (S)-isodihydrodehydrodiconiferyl alcohol + NADP(+). It catalyses the reaction (+)-dehydrodiconiferyl alcohol + NADPH + H(+) = (R)-isodihydrodehydrodiconiferyl alcohol + NADP(+). Its function is as follows. Oxidoreductase involved in lignan biosynthesis. Catalyzes the NADPH-dependent reduction of phenylcoumaran benzylic ethers. Converts dehydrodiconiferyl alcohol (DDC) to isodihydrodehydrodiconiferyl alcohol (IDDDC). The chain is Phenylcoumaran benzylic ether reductase Betv6 from Betula pendula (European white birch).